Reading from the N-terminus, the 199-residue chain is Recombination protein RecR (199 aa).

Residues 57–72 (CQSCRTFTEETYCPIC) form a C4-type zinc finger. Residues 81-176 (SVICVVETPA…AVSRIAHGVP (96 aa)) enclose the Toprim domain.

Belongs to the RecR family.

Its function is as follows. May play a role in DNA repair. It seems to be involved in an RecBC-independent recombinational process of DNA repair. It may act with RecF and RecO. The polypeptide is Recombination protein RecR (Shewanella piezotolerans (strain WP3 / JCM 13877)).